Here is a 513-residue protein sequence, read N- to C-terminus: ATP synthase subunit alpha (513 aa).

An ATP-binding site is contributed by Gly169–Thr176.

Belongs to the ATPase alpha/beta chains family. As to quaternary structure, F-type ATPases have 2 components, CF(1) - the catalytic core - and CF(0) - the membrane proton channel. CF(1) has five subunits: alpha(3), beta(3), gamma(1), delta(1), epsilon(1). CF(0) has three main subunits: a(1), b(2) and c(9-12). The alpha and beta chains form an alternating ring which encloses part of the gamma chain. CF(1) is attached to CF(0) by a central stalk formed by the gamma and epsilon chains, while a peripheral stalk is formed by the delta and b chains.

The protein localises to the cell inner membrane. The enzyme catalyses ATP + H2O + 4 H(+)(in) = ADP + phosphate + 5 H(+)(out). Produces ATP from ADP in the presence of a proton gradient across the membrane. The alpha chain is a regulatory subunit. This is ATP synthase subunit alpha from Yersinia pseudotuberculosis serotype O:1b (strain IP 31758).